A 316-amino-acid polypeptide reads, in one-letter code: Probable porphobilinogen deaminase (316 aa).

The residue at position 234 (cysteine 234) is an S-(dipyrrolylmethanemethyl)cysteine.

It belongs to the HMBS family. Dipyrromethane serves as cofactor.

The enzyme catalyses 4 porphobilinogen + H2O = hydroxymethylbilane + 4 NH4(+). The protein operates within porphyrin-containing compound metabolism; protoporphyrin-IX biosynthesis; coproporphyrinogen-III from 5-aminolevulinate: step 2/4. Functionally, tetrapolymerization of the monopyrrole PBG into the hydroxymethylbilane pre-uroporphyrinogen in several discrete steps. The protein is Probable porphobilinogen deaminase of Methanosarcina barkeri (strain Fusaro / DSM 804).